The following is an 865-amino-acid chain: General transcription factor 3C polypeptide 5 (865 aa).

Disordered regions lie at residues 1–21, 111–163, 191–215, 391–522, and 669–865; these read MNDE…NNNS, RPNK…NEKF, NNNT…TVPI, QDNH…NKEG, and DNKM…EESE. Low complexity-rich tracts occupy residues 7–21, 115–126, 140–158, 199–210, and 401–411; these read KNNS…NNNS, QQTQTQTQTQTQ, QSPK…QQPQ, DNVNDSSSSSSS, and SKNNNNNNNNK. Basic and acidic residues-rich tracts occupy residues 412 to 439 and 448 to 489; these read DSIK…KQEE and NNEK…KGDD. 2 stretches are compositionally biased toward low complexity: residues 508–521 and 677–696; these read EGNN…NNKE and RSNT…PKST. 3 stretches are compositionally biased toward basic and acidic residues: residues 697–713, 757–766, and 773–786; these read QPKE…EPRP, QNKEIDESLK, and MEKD…KNEE. Acidic residues-rich tracts occupy residues 800–820 and 839–865; these read DYDD…DFDG and EDSE…EESE.

Belongs to the TFIIIC subunit 5 family. As to quaternary structure, part of the TFIIIC complex.

The protein localises to the nucleus. In terms of biological role, involved in RNA polymerase III-mediated transcription. Integral, tightly associated component of the DNA-binding TFIIIC2 subcomplex that directly binds tRNA and virus-associated RNA promoters. The polypeptide is General transcription factor 3C polypeptide 5 (gtf3c5) (Dictyostelium discoideum (Social amoeba)).